A 545-amino-acid chain; its full sequence is External NADH-ubiquinone oxidoreductase 2, mitochondrial (545 aa).

The N-terminal 21 residues, 1 to 21 (MLPRLGFARTARSIHRFKMTQ), are a transit peptide targeting the mitochondrion. Residue 99 to 129 (ELVILGTGWGAISLLKKLDTSLYNVTVVSPR) participates in FAD binding. 260 to 296 (LTFVVVGGGPTGVEFAAELQDYINQDLRKWMPDLSKE) contributes to the NAD(+) binding site.

This sequence belongs to the NADH dehydrogenase family.

It localises to the mitochondrion intermembrane space. It carries out the reaction a quinone + NADH + H(+) = a quinol + NAD(+). The enzyme catalyses a ubiquinone + NADH + H(+) = a ubiquinol + NAD(+). Functionally, external NADH dehydrogenase required for optimum cellular growth with a number of nonfermentable carbon sources, including ethanol. With NDE1, performes the mitochondrial oxidation of cytosolic NADH under these growth conditions. Regulates the mitochondrial glycerol-3-phosphate dehydrogenase, GUT2, also involved in cytosolic NADH oxidation. The chain is External NADH-ubiquinone oxidoreductase 2, mitochondrial (NDE2) from Saccharomyces cerevisiae (strain ATCC 204508 / S288c) (Baker's yeast).